The sequence spans 1038 residues: Fibronectin-binding protein A (1038 aa).

A signal peptide spans 1-36 (MKNNLRYGIRKHKLGAASVFLGTMIVVGMGQDKEAA). A YSIRK-G/S signaling motif motif is present at residues 7 to 18 (YGIRKHKLGAAS). The disordered stretch occupies residues 37-193 (ASEQKTTTVE…VSEVKGTDVT (157 aa)). The segment at 37-507 (ASEQKTTTVE…SNKADGNGKN (471 aa)) is ligand-binding A region. A compositionally biased stretch (polar residues) spans 39–92 (EQKTTTVEENGNSATDNKTSETQTTATNVNHIEETQSYNATVTEQPSNATQVTT). The segment covering 112-121 (TVKEEEKPQV) has biased composition (basic and acidic residues). Residues 122 to 164 (KETTQPQDNSGNQRQVDLTPKKVTQNQGTETQVEVAQPRTASE) show a composition bias toward polar residues. A compositionally biased stretch (basic and acidic residues) spans 174–189 (DVAEAKEASDVSEVKG). Residues 189 to 507 (GTDVTSKVTV…SNKADGNGKN (319 aa)) are fibrinogen/elastin/tropoelastin-binding. Positions 508-868 (GQIIQDNDFE…EGQQTIEEDT (361 aa)) are fibronectin-binding. A B-1 repeat occupies 541 to 570 (ENQDNTPLDIDYHTAIDGEGGYVDGYIETI). Positions 541 to 600 (ENQDNTPLDIDYHTAIDGEGGYVDGYIETIEETDSSAIDIDYHTAVDSEVGHVGGYTESS) are 2 X approximate tandem repeats. The stretch at 571–600 (EETDSSAIDIDYHTAVDSEVGHVGGYTESS) is one B-2 repeat. Disordered regions lie at residues 736-804 (LGYE…GGNI), 825-976 (IEED…GKVV), and 989-1015 (VAPT…NKGM). The stretch at 741-778 (GQNSGNQSFEEDTEEDKPKYEQGGNIVDIDFDSVPQIH) is one D-1 repeat. The 4 X approximate tandem repeats stretch occupies residues 741–898 (GQNSGNQSFE…TPEVPSEPET (158 aa)). The stretch at 779-816 (GQNKGDQSFEEDTEKDKPKYEHGGNIIDIDFDSVPQIH) is one D-2 repeat. The D-3 repeat unit spans residues 817-855 (GFNKHNEIIEEDTNKDKPNYQFGGHNSVDFEEDTLPKVS). Residues 825–834 (IEEDTNKDKP) are compositionally biased toward basic and acidic residues. A D-4 repeat occupies 856-898 (GQNEGQQTIEEDTTPPTPPTPEVPSEPETPMPPTPEVPSEPET). A compositionally biased stretch (pro residues) spans 870–958 (PPTPPTPEVP…PAEPGKPVPP (89 aa)). 5 WR repeats span residues 899-912 (PTPP…EPET), 913-926 (PTPP…EPET), 927-940 (PTPP…EPET), 941-954 (PTPP…EPGK), and 955-968 (PVPP…KPSK). The 5 X tandem repeats, Pro-rich (WR) stretch occupies residues 899-968 (PTPPTPEVPS…AKEEPKKPSK (70 aa)). The LPXTG sorting signal signature appears at 1002–1006 (LPETG). T1005 bears the Pentaglycyl murein peptidoglycan amidated threonine mark. The propeptide at 1006-1038 (GGEESTNKGMLFGGLFSILGLALLRRNKKNNKA) is removed by sortase.

The protein resides in the secreted. It localises to the cell wall. Its function is as follows. Promotes bacterial attachment to multiple substrates, such as fibronectin (Fn), fibrinogen (Fg), elastin peptides and tropoelastin. This confers to S.aureus the ability to invade endothelial cells. Promotes adherence to and aggregation of activated platelets. The sequence is that of Fibronectin-binding protein A (fnbA) from Staphylococcus aureus (strain Mu50 / ATCC 700699).